The primary structure comprises 535 residues: CTP synthase (535 aa).

The segment at 1 to 267 (MTKYIFVTGG…DQIVCDHLKL (267 aa)) is amidoligase domain. Residue serine 13 coordinates CTP. Serine 13 is a UTP binding site. ATP is bound at residue 14 to 19 (SLGKGI). Tyrosine 54 provides a ligand contact to L-glutamine. Aspartate 71 is an ATP binding site. Residues aspartate 71 and glutamate 141 each contribute to the Mg(2+) site. CTP contacts are provided by residues 148–150 (DIE), 188–193 (KTKPTQ), and lysine 224. Residues 188–193 (KTKPTQ) and lysine 224 contribute to the UTP site. 240–242 (RDA) lines the ATP pocket. Positions 292–534 (KIALVGKYVE…VKASITNKES (243 aa)) constitute a Glutamine amidotransferase type-1 domain. An L-glutamine-binding site is contributed by glycine 354. Cysteine 381 functions as the Nucleophile; for glutamine hydrolysis in the catalytic mechanism. L-glutamine contacts are provided by residues 382-385 (LGMQ), glutamate 405, and arginine 462. Active-site residues include histidine 507 and glutamate 509.

It belongs to the CTP synthase family. As to quaternary structure, homotetramer.

It carries out the reaction UTP + L-glutamine + ATP + H2O = CTP + L-glutamate + ADP + phosphate + 2 H(+). It catalyses the reaction L-glutamine + H2O = L-glutamate + NH4(+). The catalysed reaction is UTP + NH4(+) + ATP = CTP + ADP + phosphate + 2 H(+). It participates in pyrimidine metabolism; CTP biosynthesis via de novo pathway; CTP from UDP: step 2/2. Its activity is regulated as follows. Allosterically activated by GTP, when glutamine is the substrate; GTP has no effect on the reaction when ammonia is the substrate. The allosteric effector GTP functions by stabilizing the protein conformation that binds the tetrahedral intermediate(s) formed during glutamine hydrolysis. Inhibited by the product CTP, via allosteric rather than competitive inhibition. In terms of biological role, catalyzes the ATP-dependent amination of UTP to CTP with either L-glutamine or ammonia as the source of nitrogen. Regulates intracellular CTP levels through interactions with the four ribonucleotide triphosphates. In Bacillus thuringiensis subsp. konkukian (strain 97-27), this protein is CTP synthase.